Reading from the N-terminus, the 459-residue chain is Spermatogenesis-associated protein 1 (459 aa).

Basic and acidic residues predominate over residues 193 to 205 (LKELPNKNQEEAG). A disordered region spans residues 193–213 (LKELPNKNQEEAGGKATAEKS). Coiled coils occupy residues 287–374 (TDIS…YKKL) and 400–453 (LIIQ…KKII).

In terms of assembly, interacts with IFT20.

The protein resides in the cytoplasmic vesicle. It is found in the secretory vesicle. It localises to the acrosome. The sequence is that of Spermatogenesis-associated protein 1 (SPATA1) from Homo sapiens (Human).